A 73-amino-acid polypeptide reads, in one-letter code: MTAIFNFESLLFVILLTICTCTYLHRQFPALLEKRKEGVTMVFWKCARIGERASPYISLFCVFMALRFIFGSS.

The first 21 residues, 1–21 (MTAIFNFESLLFVILLTICTC), serve as a signal peptide directing secretion. Topologically, residues 22 to 52 (TYLHRQFPALLEKRKEGVTMVFWKCARIGER) are lumenal. The chain crosses the membrane as a helical span at residues 53-73 (ASPYISLFCVFMALRFIFGSS).

Belongs to the KISH family.

Its subcellular location is the golgi apparatus membrane. The protein resides in the endoplasmic reticulum membrane. Involved in the early part of the secretory pathway. This Schizosaccharomyces pombe (strain 972 / ATCC 24843) (Fission yeast) protein is Protein kish (ksh1).